The sequence spans 245 residues: Mannose/glucose-specific lectin (245 aa).

A carbohydrate contacts are provided by Asp87 and Gly107. A glycan (N-linked (GlcNAc...) asparagine) is linked at Asn119. The Mn(2+) site is built by Glu129 and Asp131. Ca(2+)-binding residues include Asp131 and Phe133. The a carbohydrate site is built by Ser138 and Asn139. The Ca(2+) site is built by Asn139 and Asp142. 2 residues coordinate Mn(2+): Asp142 and His147. The a carbohydrate site is built by Gly221, Glu222, and Gln223.

It belongs to the leguminous lectin family. In terms of assembly, homodimer.

Mannose/glucose-specific lectin that also binds derivatives N-acetyl-D-glucosamine and alpha-methyl-D-mannopyranoside with even higher affinity. Has hemagglutinating activity towards rabbit erythrocytes. Is toxic towards brine shrimp A.nauplii. In rats, induces dose-dependent paw edema. This Centrolobium tomentosum (Arariba) protein is Mannose/glucose-specific lectin.